The chain runs to 205 residues: 3-demethoxyubiquinol 3-hydroxylase (205 aa).

Fe cation-binding residues include Glu-54, Glu-84, His-87, Glu-136, Glu-168, and His-171.

Belongs to the COQ7 family. Fe cation serves as cofactor.

It localises to the cell membrane. It carries out the reaction a 5-methoxy-2-methyl-3-(all-trans-polyprenyl)benzene-1,4-diol + AH2 + O2 = a 3-demethylubiquinol + A + H2O. It functions in the pathway cofactor biosynthesis; ubiquinone biosynthesis. Its function is as follows. Catalyzes the hydroxylation of 2-nonaprenyl-3-methyl-6-methoxy-1,4-benzoquinol during ubiquinone biosynthesis. The sequence is that of 3-demethoxyubiquinol 3-hydroxylase from Acidovorax sp. (strain JS42).